Consider the following 429-residue polypeptide: Lysine-specific demethylase JMJ30 (429 aa).

In terms of domain architecture, JmjC spans 272–429 (SSPMEPTYLA…WSNEAESSSS (158 aa)). Fe cation contacts are provided by histidine 326, aspartate 328, and histidine 405.

It belongs to the JARID1 histone demethylase family. As to quaternary structure, interacts with EFM. Binds to ATXR2, ARF7 and ARF19. The cofactor is Fe(2+). In terms of tissue distribution, expressed ubiquitously in vasculatures, roots, rosette leaves, stems, inflorescences and siliques. Mainly present in the root meristem and root differentiation area. Observed at high level in callus.

The protein localises to the nucleus. Its subcellular location is the cytoplasm. It is found in the endoplasmic reticulum. The enzyme catalyses N(6),N(6),N(6)-trimethyl-L-lysyl(36)-[histone H3] + 2 2-oxoglutarate + 2 O2 = N(6)-methyl-L-lysyl(36)-[histone H3] + 2 formaldehyde + 2 succinate + 2 CO2. The catalysed reaction is N(6),N(6),N(6)-trimethyl-L-lysyl(27)-[histone H3] + 2 2-oxoglutarate + 2 O2 = N(6)-methyl-L-lysyl(27)-[histone H3] + 2 formaldehyde + 2 succinate + 2 CO2. It carries out the reaction N(6),N(6)-dimethyl-L-lysyl(36)-[histone H3] + 2 2-oxoglutarate + 2 O2 = L-lysyl(36)-[histone H3] + 2 formaldehyde + 2 succinate + 2 CO2. Functionally, histone demethylase that demethylates 'Lys-36' (H3K36me) of histone H3 with a specific activity for H3K36me3 and H3K36me2. Also active on 'Lys-27' (H3K27me) of histone H3 with a specific activity for H3K27me3 and H3K27me2. No activity on H3K36me1 and H3K27me1. Involved in the control of flowering time by demethylating H3K36me2 at the FT locus and repressing its expression. Acts within the central clock and contributes, in parallel with LUX, to temperature compensation, probably as a component of the evening complex, to maintain circadian period at increasing temperatures; this mechanism involves binding to and regulation of CCA1 and PRR7 promoters. Works in concert with TOC1 to promote the morning-phased clock genes CCA1 and LHY which function as components of the central oscillator. Together with JMJ32, regulates the flowering-repressor FLOWERING LOCUS C (FLC) locus by removing the repressive histone modification H3 lysine 27 trimethylation (H3K27me3), especially at elevated temperatures (e.g. 29 degrees Celsius), thus preventing extreme precocious flowering. JMJ30 and JMJ32 are regulators involved in the integration of abscisic acid (ABA) and brassinosteroids (BR) signaling pathways. Together with JMJ32, controls ABA-mediated growth arrest during the post-germination stage in unfavorable conditions, and responses to ABA during root development, via the removal of repressive histone mark (H3K27me3) from the SnRK2.8 promoter, thus promoting SnRK2.8 expression and subsequent kinase-dependent ABI3 activation. In addition, removes the repressive histone marks (H3K27me3) from the BZR1 locus in response to stress and ABA, thus activating the BR signaling pathway which, in turn, inhibits the ABA signaling pathway. Able to drive tissue identity changes to promote callus formation form somatic cells via a massive genome-wide chromatin remodeling (e.g. H3K9me3 demethylation) leading to the induction of Lateral organ Boundaries-Domain (LBD) genes (e.g. LBD16 and LBD29) that establish root primordia; when in complex with ARF proteins (e.g. ARF7 and ARF19), recruits ATXR2 which promotes the deposition of H3K36me3 at LBD genes promoters, thus ensuring their stable activation during callus formation. This Arabidopsis thaliana (Mouse-ear cress) protein is Lysine-specific demethylase JMJ30.